We begin with the raw amino-acid sequence, 351 residues long: Protein-glutamate methylesterase/protein-glutamine glutaminase 2 (351 aa).

Residues 4 to 121 enclose the Response regulatory domain; it reads KVLVVDDSAL…PQDFNEYQDL (118 aa). Aspartate 55 bears the 4-aspartylphosphate mark. In terms of domain architecture, CheB-type methylesterase spans 156 to 348; sequence RVINTQLVAI…DKMLNYLASL (193 aa). Catalysis depends on residues serine 168, histidine 194, and aspartate 290.

Belongs to the CheB family. Post-translationally, phosphorylated by CheA. Phosphorylation of the N-terminal regulatory domain activates the methylesterase activity.

It localises to the cytoplasm. The catalysed reaction is [protein]-L-glutamate 5-O-methyl ester + H2O = L-glutamyl-[protein] + methanol + H(+). The enzyme catalyses L-glutaminyl-[protein] + H2O = L-glutamyl-[protein] + NH4(+). Functionally, involved in chemotaxis. Part of a chemotaxis signal transduction system that modulates chemotaxis in response to various stimuli. Catalyzes the demethylation of specific methylglutamate residues introduced into the chemoreceptors (methyl-accepting chemotaxis proteins or MCP) by CheR. Also mediates the irreversible deamidation of specific glutamine residues to glutamic acid. This Shewanella sp. (strain MR-4) protein is Protein-glutamate methylesterase/protein-glutamine glutaminase 2.